The following is a 633-amino-acid chain: GTPase-GDP dissociation stimulator BEM4 (633 aa).

As to quaternary structure, interacts with CDC42; the interaction is direct. Interacts with RHO1; the interaction is direct. Interacts with RHO2. Interacts with RHO4. Interacts with CDC11.

The protein resides in the nucleus. The protein localises to the cytoplasm. Functionally, probably acts as a GEF (guanine nucleotide exchange factor) for the Rho family of small GTP-binding proteins (G proteins) that stimulates the dissociation of GDP to enable subsequent binding of GTP. May also chaperone the processing and/or trafficking of small GTPases independently of GEF activity. Involved in the control of polarized cell growth via CDC42-mediated signaling. Involved in the control of cell-wall organization via RHO1-mediated signaling. May also function via RHO2 and RHO4. The chain is GTPase-GDP dissociation stimulator BEM4 from Saccharomyces cerevisiae (strain ATCC 204508 / S288c) (Baker's yeast).